A 166-amino-acid polypeptide reads, in one-letter code: MARNKEIEIDTRLGRRSVDADKVVHFPRGLAGFENERDFILLQIRPEAPLLILQSMSNPVVGLLVADPYSFMEKSAYAPAMGEAEKQLLRISDLDEAAVLVTVTIPAGQPGEAALNLAGPIVINSRERVGLQVPQCSDGPQQIYMHSLKPVGESGQAEKSEAAPAE.

Belongs to the FliW family. As to quaternary structure, interacts with translational regulator CsrA and flagellin(s).

It is found in the cytoplasm. Its function is as follows. Acts as an anti-CsrA protein, binds CsrA and prevents it from repressing translation of its target genes, one of which is flagellin. Binds to flagellin and participates in the assembly of the flagellum. This chain is Flagellar assembly factor FliW, found in Desulfovibrio desulfuricans (strain ATCC 27774 / DSM 6949 / MB).